Reading from the N-terminus, the 942-residue chain is DNA mismatch repair protein MSH2 (942 aa).

667 to 674 contacts ATP; it reads GPNMGGKS.

It belongs to the DNA mismatch repair MutS family. Heterodimer of MSH2 and MSH6 (GTBP).

The protein resides in the nucleus. In terms of biological role, involved in postreplication mismatch repair. Binds specifically to DNA containing mismatched nucleotides thus providing a target for the excision repair processes characteristic of postreplication mismatch repair. In Zea mays (Maize), this protein is DNA mismatch repair protein MSH2 (MUS1).